The following is a 252-amino-acid chain: Imidazole glycerol phosphate synthase subunit HisF (252 aa).

Catalysis depends on residues aspartate 11 and aspartate 130.

Belongs to the HisA/HisF family. As to quaternary structure, heterodimer of HisH and HisF.

It is found in the cytoplasm. It carries out the reaction 5-[(5-phospho-1-deoxy-D-ribulos-1-ylimino)methylamino]-1-(5-phospho-beta-D-ribosyl)imidazole-4-carboxamide + L-glutamine = D-erythro-1-(imidazol-4-yl)glycerol 3-phosphate + 5-amino-1-(5-phospho-beta-D-ribosyl)imidazole-4-carboxamide + L-glutamate + H(+). Its pathway is amino-acid biosynthesis; L-histidine biosynthesis; L-histidine from 5-phospho-alpha-D-ribose 1-diphosphate: step 5/9. In terms of biological role, IGPS catalyzes the conversion of PRFAR and glutamine to IGP, AICAR and glutamate. The HisF subunit catalyzes the cyclization activity that produces IGP and AICAR from PRFAR using the ammonia provided by the HisH subunit. This Staphylococcus aureus (strain Mu3 / ATCC 700698) protein is Imidazole glycerol phosphate synthase subunit HisF.